A 732-amino-acid polypeptide reads, in one-letter code: Catalase-peroxidase (732 aa).

The interval 1–23 (MSEQSRCPVTGRTADSPATGSGL) is disordered. A cross-link (tryptophyl-tyrosyl-methioninium (Trp-Tyr) (with M-246)) is located at residues 97 to 220 (WHSAGTYRTS…LAAVQMGLIY (124 aa)). Histidine 98 serves as the catalytic Proton acceptor. The segment at residues 220 to 246 (YVNPEGPDGKPDPVAAGRDIRETFARM) is a cross-link (tryptophyl-tyrosyl-methioninium (Tyr-Met) (with W-97)). Histidine 261 lines the heme b pocket.

Belongs to the peroxidase family. Peroxidase/catalase subfamily. In terms of assembly, homodimer or homotetramer. It depends on heme b as a cofactor. Post-translationally, formation of the three residue Trp-Tyr-Met cross-link is important for the catalase, but not the peroxidase activity of the enzyme.

The catalysed reaction is H2O2 + AH2 = A + 2 H2O. It carries out the reaction 2 H2O2 = O2 + 2 H2O. In terms of biological role, bifunctional enzyme with both catalase and broad-spectrum peroxidase activity. This Prosthecochloris aestuarii (strain DSM 271 / SK 413) protein is Catalase-peroxidase.